Here is a 177-residue protein sequence, read N- to C-terminus: Large ribosomal subunit protein uL6 (177 aa).

This sequence belongs to the universal ribosomal protein uL6 family. Part of the 50S ribosomal subunit.

Functionally, this protein binds to the 23S rRNA, and is important in its secondary structure. It is located near the subunit interface in the base of the L7/L12 stalk, and near the tRNA binding site of the peptidyltransferase center. This Rhodospirillum centenum (strain ATCC 51521 / SW) protein is Large ribosomal subunit protein uL6.